Reading from the N-terminus, the 394-residue chain is Protein maelstrom (394 aa).

Residues 2 to 69 (APKKQNGFMM…ARRDKRGSLN (68 aa)) constitute a DNA-binding region (HMG box). The tract at residues 44–93 (TQQRGPYNSDAKDANAARRDKRGSLNGHGQVDKAQREAAESLMDKAQREA) is disordered. A compositionally biased stretch (basic and acidic residues) spans 73-93 (QVDKAQREAAESLMDKAQREA).

It belongs to the maelstrom family.

The protein resides in the cytoplasm. The protein localises to the nucleus. Functionally, involved both in the piRNA and miRNA metabolic processes. As a component of the meiotic nuage, plays a central role during oogenesis by repressing transposable elements and preventing their mobilization, which is essential for the germline integrity. Repression of transposable elements is mediated via the piRNA metabolic process, which mediates the repression of transposable elements during meiosis by forming complexes composed of piRNAs and Piwi proteins and governs the repression of transposons. As a nuclear component, it is required for proper differentiation in the germline stem cell (GSC) lineage by repressing microRNA-7 (miR-7), thereby acting as an indirect regulator of bag-of-marbles (Bam). Acts by binding to the promoter of miR-7 gene and repressing its expression; miR-7 repression alleviates the Bam repression by miR-7, thereby allowing differentiation in the germline stem cell (GSC) lineage. The polypeptide is Protein maelstrom (mael) (Drosophila sechellia (Fruit fly)).